A 552-amino-acid chain; its full sequence is WAP, Kazal, immunoglobulin, Kunitz and NTR domain-containing protein 1 (552 aa).

An N-terminal signal peptide occupies residues 1–25 (MPAPQPLLPLLFAFVLIHLTSETNL). In terms of domain architecture, WAP spans 29-82 (PGSHPGMCPNQLSPHLWVDAQSTCERECTRDQDCAASEKCCTNVCGLQSCVAAR). Disulfide bonds link Cys-36-Cys-69, Cys-52-Cys-73, Cys-56-Cys-68, Cys-62-Cys-78, Cys-120-Cys-150, Cys-124-Cys-143, Cys-132-Cys-161, Cys-211-Cys-267, Cys-303-Cys-355, Cys-310-Cys-338, Cys-330-Cys-351, Cys-363-Cys-413, Cys-372-Cys-396, Cys-388-Cys-409, Cys-421-Cys-493, Cys-424-Cys-495, and Cys-435-Cys-544. The region spanning 112 to 163 (WDGQPVCRCRDRCEKEPSFTCASDGLTYYNRCYMDAEACLRGLHLHVVPCKH) is the Kazal-like domain. One can recognise an Ig-like C2-type domain in the interval 190–283 (PALYNSPSPQ…GLLRADFPLS (94 aa)). 2 consecutive BPTI/Kunitz inhibitor domains span residues 289–355 (TTQD…QQAC) and 363–413 (CALP…EDAC). The NTR domain occupies 413–544 (CPVPRTPPCR…IVELLEKKAC (132 aa)). N-linked (GlcNAc...) asparagine glycosylation occurs at Asn-497.

Belongs to the WFIKKN family. In terms of tissue distribution, preferentially expressed in the developing inner ear and the dorsal neural tube.

It is found in the secreted. Protease-inhibitor that contains multiple distinct protease inhibitor domains. Probably has serine protease- and metalloprotease-inhibitor activity. The chain is WAP, Kazal, immunoglobulin, Kunitz and NTR domain-containing protein 1 (Wfikkn1) from Rattus norvegicus (Rat).